The chain runs to 345 residues: Phosphoribosylformylglycinamidine cyclo-ligase (345 aa).

Belongs to the AIR synthase family.

Its subcellular location is the cytoplasm. It catalyses the reaction 2-formamido-N(1)-(5-O-phospho-beta-D-ribosyl)acetamidine + ATP = 5-amino-1-(5-phospho-beta-D-ribosyl)imidazole + ADP + phosphate + H(+). It participates in purine metabolism; IMP biosynthesis via de novo pathway; 5-amino-1-(5-phospho-D-ribosyl)imidazole from N(2)-formyl-N(1)-(5-phospho-D-ribosyl)glycinamide: step 2/2. In Escherichia coli (strain 55989 / EAEC), this protein is Phosphoribosylformylglycinamidine cyclo-ligase.